The following is a 118-amino-acid chain: T cell receptor gamma variable 8 (118 aa).

The signal sequence occupies residues 1–17; the sequence is MLLALALLLAFLPPASQ. The region spanning 18–118 is the Ig-like domain; the sequence is KSSNLEGRTK…GVYYCATWDR (101 aa). A disulfide bond links Cys-41 and Cys-113.

Gamma-delta TR is a heterodimer composed of a gamma and delta chain; disulfide-linked. The gamma-delta TR is associated with the transmembrane signaling CD3 coreceptor proteins following the stoichiometry: a single gamma-delta TR heterodimer associates with one CD3D-CD3E heterodimer, one CD3G-CD3E heterodimer and one CD247 homodimer forming a stable octameric structure. Upon activation, gamma-delta TR complex associates with FCER1G to initiate intracellular signaling.

It localises to the cell membrane. In terms of biological role, v region of the variable domain of T cell receptor (TR) gamma chain that participates in the antigen recognition. Gamma-delta TRs recognize a variety of self and foreign non-peptide antigens frequently expressed at the epithelial boundaries between the host and external environment, including endogenous lipids presented by MH-like protein CD1D and phosphoantigens presented by butyrophilin-like molecule BTN3A1. Upon antigen recognition induces rapid, innate-like immune responses involved in pathogen clearance and tissue repair. Binding of gamma-delta TR complex to antigen triggers phosphorylation of immunoreceptor tyrosine-based activation motifs (ITAMs) in the CD3 chains by the LCK and FYN kinases, allowing the recruitment, phosphorylation, and activation of ZAP70 that facilitates phosphorylation of the scaffolding proteins LCP2 and LAT. This lead to the formation of a supramolecular signalosome that recruits the phospholipase PLCG1, resulting in calcium mobilization and ERK activation, ultimately leading to T cell expansion and differentiation into effector cells. Gamma-delta TRs are produced through somatic rearrangement of a limited repertoire of variable (V), diversity (D), and joining (J) genes. The potential diversity of gamma-delta TRs is conferred by the unique ability to rearrange (D) genes in tandem and to utilize all three reading frames. The combinatorial diversity is considerably increased by the sequence exonuclease trimming and random nucleotide (N) region additions which occur during the V-(D)-J rearrangements. The sequence is that of T cell receptor gamma variable 8 from Homo sapiens (Human).